A 314-amino-acid chain; its full sequence is Homoserine O-acetyltransferase (314 aa).

C142 acts as the Acyl-thioester intermediate in catalysis. Residues K163 and S192 each contribute to the substrate site. H235 (proton acceptor) is an active-site residue. Residue E237 is part of the active site. R249 serves as a coordination point for substrate.

Belongs to the MetA family.

The protein resides in the cytoplasm. It catalyses the reaction L-homoserine + acetyl-CoA = O-acetyl-L-homoserine + CoA. Its pathway is amino-acid biosynthesis; L-methionine biosynthesis via de novo pathway; O-acetyl-L-homoserine from L-homoserine: step 1/1. Transfers an acetyl group from acetyl-CoA to L-homoserine, forming acetyl-L-homoserine. The sequence is that of Homoserine O-acetyltransferase from Streptococcus thermophilus (strain ATCC BAA-491 / LMD-9).